The chain runs to 1856 residues: Autophagy-related protein 2 (1856 aa).

7 disordered regions span residues 123 to 167 (NTND…TGNK), 229 to 283 (LRTL…GNES), 309 to 328 (KSAASGIPGEVDNKATDKED), 395 to 428 (TKSRSAQRNEKFPQYTNDNDEIPEDQSESDDASH), 1157 to 1177 (LNGTENGSTSESSSQEASSLM), 1614 to 1647 (MLGGEGSSVRSPNLGGSDNRRNSNASDELPVEVA), and 1719 to 1741 (KLQPHTKGNHEGLTEEEEDEDED). Residues 137–147 (ASEDDDEDDID) show a composition bias toward acidic residues. Polar residues predominate over residues 250–262 (KKQQGSDNDSPTD). The segment covering 270 to 280 (NDNDDDDDDYG) has biased composition (acidic residues). The segment covering 412–424 (DNDEIPEDQSESD) has biased composition (acidic residues). The span at 1157 to 1170 (LNGTENGSTSESSS) shows a compositional bias: low complexity. Residues 1621 to 1639 (SVRSPNLGGSDNRRNSNAS) show a composition bias toward polar residues. Residues 1732–1741 (TEEEEDEDED) show a composition bias toward acidic residues.

It belongs to the ATG2 family.

The protein localises to the preautophagosomal structure membrane. It localises to the endoplasmic reticulum membrane. It carries out the reaction a 1,2-diacyl-sn-glycero-3-phosphocholine(in) = a 1,2-diacyl-sn-glycero-3-phosphocholine(out). The enzyme catalyses a 1,2-diacyl-sn-glycero-3-phospho-L-serine(in) = a 1,2-diacyl-sn-glycero-3-phospho-L-serine(out). The catalysed reaction is a 1,2-diacyl-sn-glycero-3-phosphoethanolamine(in) = a 1,2-diacyl-sn-glycero-3-phosphoethanolamine(out). Lipid transfer protein required for autophagosome completion and peroxisome degradation. Tethers the edge of the isolation membrane (IM) to the endoplasmic reticulum (ER) and mediates direct lipid transfer from ER to IM for IM expansion. ATG2/SPO72 binds to the ER exit site (ERES), which is the membrane source for autophagosome formation, using basic residues in its N-terminal region (NR) and to the expanding edge of the IM through its C-terminal region. The latter binding is assisted by an ATG18-PtdIns3P interaction. ATG2/SPO72 then extracts phospholipids from the membrane source using its NR and transfers them to ATG9 to the IM through its predicted beta-sheet-rich structure for membrane expansion. The chain is Autophagy-related protein 2 (SPO72) from Candida albicans (strain SC5314 / ATCC MYA-2876) (Yeast).